Consider the following 476-residue polypeptide: NADH-quinone oxidoreductase subunit N (476 aa).

The next 14 membrane-spanning stretches (helical) occupy residues 8–28, 35–55, 71–91, 102–122, 124–144, 159–179, 201–221, 239–259, 267–287, 295–315, 322–342, 366–386, 405–425, and 437–457; these read ITTE…GLLV, GLGS…IINW, YATF…LGSF, FEYY…ASAG, FITL…LVAF, ILLA…VYGA, LIVG…AVPF, FLAV…FAGG, WTLL…LVAI, MLAY…VSAT, VMFY…VVAI, ASVM…AGFV, LGLI…LVMF, and VGGA…ILGI.

The protein belongs to the complex I subunit 2 family. NDH-1 is composed of 14 different subunits. Subunits NuoA, H, J, K, L, M, N constitute the membrane sector of the complex.

The protein localises to the cell membrane. It catalyses the reaction a quinone + NADH + 5 H(+)(in) = a quinol + NAD(+) + 4 H(+)(out). Functionally, NDH-1 shuttles electrons from NADH, via FMN and iron-sulfur (Fe-S) centers, to quinones in the respiratory chain. The immediate electron acceptor for the enzyme in this species is believed to be a menaquinone. Couples the redox reaction to proton translocation (for every two electrons transferred, four hydrogen ions are translocated across the cytoplasmic membrane), and thus conserves the redox energy in a proton gradient. The polypeptide is NADH-quinone oxidoreductase subunit N (Desulforamulus reducens (strain ATCC BAA-1160 / DSM 100696 / MI-1) (Desulfotomaculum reducens)).